The sequence spans 375 residues: Lipid-A-disaccharide synthase (375 aa).

It belongs to the LpxB family.

The enzyme catalyses a lipid X + a UDP-2-N,3-O-bis[(3R)-3-hydroxyacyl]-alpha-D-glucosamine = a lipid A disaccharide + UDP + H(+). Its pathway is bacterial outer membrane biogenesis; LPS lipid A biosynthesis. In terms of biological role, condensation of UDP-2,3-diacylglucosamine and 2,3-diacylglucosamine-1-phosphate to form lipid A disaccharide, a precursor of lipid A, a phosphorylated glycolipid that anchors the lipopolysaccharide to the outer membrane of the cell. This is Lipid-A-disaccharide synthase from Pseudomonas putida (strain ATCC 700007 / DSM 6899 / JCM 31910 / BCRC 17059 / LMG 24140 / F1).